The following is a 272-amino-acid chain: Catechol O-methyltransferase (272 aa).

Topologically, residues 1 to 6 (MLEAPP) are cytoplasmic. The helical; Signal-anchor for type II membrane protein transmembrane segment at 7–27 (LLLVAGGVGLALLALRWLATT) threads the bilayer. Over 28–272 (DLQFFGRAFI…YKGLSGPARP (245 aa)) the chain is Extracellular. Residues V93, E115, S123, E141, 168-171 (GASQ), S170, and D192 each bind S-adenosyl-L-methionine. D192 serves as a coordination point for Mg(2+). K195 serves as a coordination point for substrate. Residues D220 and N221 each contribute to the Mg(2+) site. The substrate site is built by N221 and E250. Phosphoserine is present on S267.

It belongs to the class I-like SAM-binding methyltransferase superfamily. Cation-dependent O-methyltransferase family. Requires Mg(2+) as cofactor.

The protein localises to the cytoplasm. The protein resides in the cell membrane. The enzyme catalyses a catechol + S-adenosyl-L-methionine = a guaiacol + S-adenosyl-L-homocysteine + H(+). It carries out the reaction 2-hydroxyestrone + S-adenosyl-L-methionine = 2-hydroxy-3-methoxy-estrone + S-adenosyl-L-homocysteine + H(+). The catalysed reaction is 4-hydroxyestrone + S-adenosyl-L-methionine = 4-methoxyestrone + S-adenosyl-L-homocysteine + H(+). It catalyses the reaction 2-hydroxyestrone + S-adenosyl-L-methionine = 2-methoxyestrone + S-adenosyl-L-homocysteine + H(+). The enzyme catalyses 4-hydroxy-17beta-estradiol + S-adenosyl-L-methionine = 4-methoxy-17beta-estradiol + S-adenosyl-L-homocysteine + H(+). It carries out the reaction 2-hydroxy-17beta-estradiol + S-adenosyl-L-methionine = 2-hydroxy-3-methoxy-17beta-estradiol + S-adenosyl-L-homocysteine + H(+). The catalysed reaction is 2-hydroxy-17beta-estradiol + S-adenosyl-L-methionine = 2-methoxy-17beta-estradiol + S-adenosyl-L-homocysteine + H(+). Functionally, catalyzes the O-methylation, and thereby the inactivation, of catecholamine neurotransmitters and catechol hormones. Also shortens the biological half-lives of certain neuroactive drugs, like L-DOPA, alpha-methyl DOPA and isoproterenol. The sequence is that of Catechol O-methyltransferase (COMT) from Bos taurus (Bovine).